A 1007-amino-acid chain; its full sequence is Sal-like protein 2 (1007 aa).

A disordered region spans residues 1–33 (MSRRKQRKPQQLISDCEGPSASENGDASEEDHP). A C2H2-type 1; atypical zinc finger spans residues 34-56 (QVCAKCCAQFTDPTEFLAHQNAC). Disordered stretches follow at residues 59–121 (DPPV…GEES), 137–177 (GGGL…SGHL), 220–243 (PASPSELPGTGTASSTKPLLPLFS), and 286–306 (PFSAGGVGRSHKPTPAPSPAL). Over residues 70–80 (ENPNNSSASSE) the composition is skewed to low complexity. The segment covering 99–108 (PPDSGSSVPT) has biased composition (polar residues). A compositionally biased stretch (pro residues) spans 151-171 (PLPPESTPAPPPPPPPPPPPG). A Phosphoserine modification is found at serine 243. C2H2-type zinc fingers lie at residues 373–395 (HKCRFCAKVFGSDSALQIHLRSH) and 401–423 (YKCNVCGNRFTTRGNLKVHFHRH). Disordered regions lie at residues 520–540 (KNKADENTPPGSEGSAISGVA) and 610–629 (AASGAPTTSAPAPSSSASSG). 3 consecutive C2H2-type zinc fingers follow at residues 631–653 (NQCVICLRVLSCPRALRLHYGQH), 659–681 (FKCKVCGRAFSTRGNLRAHFVGH), and 691–713 (NSCPICQKKFTNAVTLQQHVRMH). The segment at 714–886 (LGGQIPNGGT…SALTPEGEAT (173 aa)) is disordered. Residues 734–744 (ENGSEQSTVSG) show a composition bias toward polar residues. Low complexity predominate over residues 747 to 757 (SFPQQQSQQPS). The span at 758-782 (PEEELSEEEEEEDEEEEEDVTDEDS) shows a compositional bias: acidic residues. A phosphoserine mark is found at serine 797, serine 802, and serine 806. Residues 803–812 (EEASGAEEEV) are compositionally biased toward acidic residues. Over residues 862–871 (GKEEGGKPER) the composition is skewed to basic and acidic residues. A Glycyl lysine isopeptide (Lys-Gly) (interchain with G-Cter in ubiquitin) cross-link involves residue lysine 911. 2 C2H2-type zinc fingers span residues 911–933 (KACEVCGQAFPSQAALEEHQKTH) and 940–963 (FTCVFCRQGFLERATLKKHMLLAH).

This sequence belongs to the sal C2H2-type zinc-finger protein family. As to expression, highest levels in adult brain (in different areas). Lower levels in heart; very low levels in kidney and pancreas. Expressed throughout the retina and lens vesicle as well as the periocular mesenchyme.

It is found in the nucleus. Probable transcription factor that plays a role in eye development before, during, and after optic fissure closure. This is Sal-like protein 2 (SALL2) from Homo sapiens (Human).